We begin with the raw amino-acid sequence, 40 residues long: U2-ctenitoxin-Pr1a (40 aa).

Disulfide bonds link Cys2–Cys17, Cys9–Cys22, Cys16–Cys32, and Cys24–Cys30.

Expressed by the venom gland.

The protein localises to the secreted. Functionally, neurotoxin. The polypeptide is U2-ctenitoxin-Pr1a (Phoneutria reidyi (Brazilian Amazonian armed spider)).